A 259-amino-acid polypeptide reads, in one-letter code: MELEQREGTMAAVGFEEFSAPPGSELALPPLFGGHILESELETEVEFVSGGLGDSGLRERDEEEEAARGRRRRQRELNRRKYQALGRRCREIEQVNERVLNRLHQVQRITRRLQQERRFLMRVLDSYGDDYRDSQFTIVLEDDGSQGTDVPTPGNVENEPPEKEGLSPPQRTTATLDPSSPAPGEGPSGRKRRRAPRAASSLTPELAPVQVGAEGWGQGVIKVEEDFGFEADEALDSSWVSRGPDKLLPYPTLASPPFD.

Disordered stretches follow at residues 51-72 (GLGD…GRRR) and 141-210 (EDDG…APVQ). A Phosphoserine modification is found at S167. The residue at position 172 (T172) is a Phosphothreonine. Residues S180 and S188 each carry the phosphoserine modification. T203 carries the post-translational modification Phosphothreonine. Residue K222 forms a Glycyl lysine isopeptide (Lys-Gly) (interchain with G-Cter in SUMO2) linkage. The disordered stretch occupies residues 240 to 259 (VSRGPDKLLPYPTLASPPFD). A Phosphoserine modification is found at S255.

In terms of assembly, interacts with NOL3; translocates NOL3 into the nucleus and negatively regulated TFPT-induced cell death. Component of the chromatin remodeling INO80 complex; specifically part of a complex module associated with the N-terminus of INO80. As to expression, ubiquitously expressed. Abundant in the brain.

The protein resides in the nucleus. In terms of biological role, appears to promote apoptosis in a p53/TP53-independent manner. Its function is as follows. Putative regulatory component of the chromatin remodeling INO80 complex which is involved in transcriptional regulation, DNA replication and probably DNA repair. This is TCF3 fusion partner homolog (Tfpt) from Rattus norvegicus (Rat).